Here is a 207-residue protein sequence, read N- to C-terminus: Fibroblast growth factor 18 (207 aa).

The signal sequence occupies residues 1–27 (MYSAPSACTCLCLHFLLLCFQVQVLAA). Asn39 carries N-linked (GlcNAc...) asparagine glycosylation. Cys109 and Cys127 form a disulfide bridge. Residue Asn137 is glycosylated (N-linked (GlcNAc...) asparagine). Positions 157–183 (GRPRKGPKTRENQQDVHFMKRYPKGQT) are disordered. Residues 164–174 (KTRENQQDVHF) show a composition bias toward basic and acidic residues.

The protein belongs to the heparin-binding growth factors family. As to quaternary structure, interacts with FGFR3 and FGFR4. Mainly expressed in the lung. Not detected in brain, heart, liver, kidney and small intestine.

It is found in the secreted. In terms of biological role, plays an important role in the regulation of cell proliferation, cell differentiation and cell migration. Required for normal ossification and bone development. Stimulates hepatic and intestinal proliferation. This Rattus norvegicus (Rat) protein is Fibroblast growth factor 18 (Fgf18).